Here is a 194-residue protein sequence, read N- to C-terminus: Ras-like protein RAS1 (194 aa).

16–23 (GAGGVGKS) is a binding site for GTP. An Effector region motif is present at residues 38–46 (YDPTIEDSY). GTP-binding positions include 63-67 (DTAGQ) and 122-125 (NKVD). Position 191 is a cysteine methyl ester (C191). The S-geranylgeranyl cysteine moiety is linked to residue C191. The propeptide at 192–194 (TLL) is removed in mature form.

The protein belongs to the small GTPase superfamily. Ras family.

Its subcellular location is the cell membrane. It catalyses the reaction GTP + H2O = GDP + phosphate + H(+). Its activity is regulated as follows. Alternates between an inactive form bound to GDP and an active form bound to GTP. Activated by a guanine nucleotide-exchange factor (GEF) and inactivated by a GTPase-activating protein (GAP). Ras proteins bind GDP/GTP and possess intrinsic GTPase activity. The protein is Ras-like protein RAS1 (RAS1) of Hydra vulgaris (Hydra).